A 317-amino-acid chain; its full sequence is Apolipoprotein E (317 aa).

The signal sequence occupies residues 1–18 (MKVLWAALLVTFLAGCQA). 8 consecutive repeat copies span residues 80–101 (ALMD…EQLT), 102–123 (PVAE…ARLG), 124–145 (ADME…AMLG), 146–167 (QSTE…KRLL), 168–189 (RDAD…EGAE), 190–211 (RGVS…VRAA), 212–233 (TVGS…ERLR), and 234–255 (ARME…EQVA). The interval 80 to 255 (ALMDETMKEL…RLDEVKEQVA (176 aa)) is 8 X 22 AA approximate tandem repeats. Position 143 is a methionine sulfoxide (Met143). Residue Ser147 is modified to Phosphoserine. Residues 158–168 (HLRKLRKRLLR) form an LDL and other lipoprotein receptors binding region. A heparin-binding site is contributed by 162–165 (LRKR). Residues 210 to 290 (AATVGSLAGQ…SWFEPLVEDM (81 aa)) are lipid-binding and lipoprotein association. 229–236 (GERLRARM) is a binding site for heparin. The segment at 266–317 (QQIRLQAEAFQARLKSWFEPLVEDMQRQWAGLVEKVQAAMGTSAAPVPSDNH) is homooligomerization. A specificity for association with VLDL region spans residues 278–290 (RLKSWFEPLVEDM).

Belongs to the apolipoprotein A1/A4/E family. Homotetramer. May interact with ABCA1; functionally associated with ABCA1 in the biogenesis of HDLs. May interact with APP/A4 amyloid-beta peptide; the interaction is extremely stable in vitro but its physiological significance is unclear. May interact with MAPT. May interact with MAP2. In the cerebrospinal fluid, interacts with secreted SORL1. Interacts with PMEL; this allows the loading of PMEL luminal fragment on ILVs to induce fibril nucleation. APOE exists as multiple glycosylated and sialylated glycoforms within cells and in plasma. The extent of glycosylation and sialylation are tissue and context specific. In terms of processing, glycated in plasma VLDL. Post-translationally, phosphorylated by FAM20C in the extracellular medium.

The protein localises to the secreted. It localises to the extracellular space. The protein resides in the extracellular matrix. Its subcellular location is the extracellular vesicle. It is found in the endosome. The protein localises to the multivesicular body. Its function is as follows. APOE is an apolipoprotein, a protein associating with lipid particles, that mainly functions in lipoprotein-mediated lipid transport between organs via the plasma and interstitial fluids. APOE is a core component of plasma lipoproteins and is involved in their production, conversion and clearance. Apolipoproteins are amphipathic molecules that interact both with lipids of the lipoprotein particle core and the aqueous environment of the plasma. As such, APOE associates with chylomicrons, chylomicron remnants, very low density lipoproteins (VLDL) and intermediate density lipoproteins (IDL) but shows a preferential binding to high-density lipoproteins (HDL). It also binds a wide range of cellular receptors including the LDL receptor/LDLR, the LDL receptor-related proteins LRP1, LRP2 and LRP8 and the very low-density lipoprotein receptor/VLDLR that mediate the cellular uptake of the APOE-containing lipoprotein particles. Finally, APOE also has a heparin-binding activity and binds heparan-sulfate proteoglycans on the surface of cells, a property that supports the capture and the receptor-mediated uptake of APOE-containing lipoproteins by cells. A main function of APOE is to mediate lipoprotein clearance through the uptake of chylomicrons, VLDLs, and HDLs by hepatocytes. APOE is also involved in the biosynthesis by the liver of VLDLs as well as their uptake by peripheral tissues ensuring the delivery of triglycerides and energy storage in muscle, heart and adipose tissues. By participating in the lipoprotein-mediated distribution of lipids among tissues, APOE plays a critical role in plasma and tissues lipid homeostasis. APOE is also involved in two steps of reverse cholesterol transport, the HDLs-mediated transport of cholesterol from peripheral tissues to the liver, and thereby plays an important role in cholesterol homeostasis. First, it is functionally associated with ABCA1 in the biogenesis of HDLs in tissues. Second, it is enriched in circulating HDLs and mediates their uptake by hepatocytes. APOE also plays an important role in lipid transport in the central nervous system, regulating neuron survival and sprouting. This chain is Apolipoprotein E (APOE), found in Pan troglodytes (Chimpanzee).